The chain runs to 125 residues: Holo-[acyl-carrier-protein] synthase (125 aa).

Mg(2+)-binding residues include D6 and E55.

The protein belongs to the P-Pant transferase superfamily. AcpS family. It depends on Mg(2+) as a cofactor.

The protein resides in the cytoplasm. The catalysed reaction is apo-[ACP] + CoA = holo-[ACP] + adenosine 3',5'-bisphosphate + H(+). Functionally, transfers the 4'-phosphopantetheine moiety from coenzyme A to a Ser of acyl-carrier-protein. The protein is Holo-[acyl-carrier-protein] synthase of Chlorobium phaeovibrioides (strain DSM 265 / 1930) (Prosthecochloris vibrioformis (strain DSM 265)).